The following is a 273-amino-acid chain: Nickel permease LarQ (273 aa).

Transmembrane regions (helical) follow at residues 64–84 (LIQL…ILLW), 117–137 (MLFV…FFGL), 159–179 (LAGL…AIAI), 210–230 (LIGA…LELY), and 251–271 (HWRD…FIFW).

The protein belongs to the CbiQ family. As to quaternary structure, may form an energy-coupling factor (ECF) transporter complex composed of an ATP-binding protein (A component, LarO), a transmembrane protein (T component, LarQ) and a fused possible substrate-capture protein (S component, LarMN) of unknown stoichiometry.

The protein localises to the cell membrane. In terms of biological role, probable transmembrane component of the energy-coupling factor (ECF) transporter complex LarMNQO involved in nickel import. The protein is Nickel permease LarQ of Lactiplantibacillus plantarum (strain ATCC BAA-793 / NCIMB 8826 / WCFS1) (Lactobacillus plantarum).